Here is a 260-residue protein sequence, read N- to C-terminus: Tryptophan synthase alpha chain (260 aa).

Active-site proton acceptor residues include glutamate 52 and aspartate 63.

This sequence belongs to the TrpA family. In terms of assembly, tetramer of two alpha and two beta chains.

It carries out the reaction (1S,2R)-1-C-(indol-3-yl)glycerol 3-phosphate + L-serine = D-glyceraldehyde 3-phosphate + L-tryptophan + H2O. Its pathway is amino-acid biosynthesis; L-tryptophan biosynthesis; L-tryptophan from chorismate: step 5/5. The alpha subunit is responsible for the aldol cleavage of indoleglycerol phosphate to indole and glyceraldehyde 3-phosphate. The protein is Tryptophan synthase alpha chain of Streptococcus thermophilus (strain ATCC BAA-491 / LMD-9).